Here is a 292-residue protein sequence, read N- to C-terminus: Phosphatidylglycerol--prolipoprotein diacylglyceryl transferase (292 aa).

Transmembrane regions (helical) follow at residues 7–27 (IILS…FLRE), 45–65 (FQLR…YVLA), 83–103 (LFWG…IFNW), and 116–136 (IWHG…MIFI). A 1,2-diacyl-sn-glycero-3-phospho-(1'-sn-glycerol) is bound at residue arginine 165. 2 helical membrane passes run 204–224 (PTFL…YFFV) and 264–284 (AAQV…AYII).

Belongs to the Lgt family.

It localises to the cell inner membrane. The catalysed reaction is L-cysteinyl-[prolipoprotein] + a 1,2-diacyl-sn-glycero-3-phospho-(1'-sn-glycerol) = an S-1,2-diacyl-sn-glyceryl-L-cysteinyl-[prolipoprotein] + sn-glycerol 1-phosphate + H(+). It participates in protein modification; lipoprotein biosynthesis (diacylglyceryl transfer). In terms of biological role, catalyzes the transfer of the diacylglyceryl group from phosphatidylglycerol to the sulfhydryl group of the N-terminal cysteine of a prolipoprotein, the first step in the formation of mature lipoproteins. This is Phosphatidylglycerol--prolipoprotein diacylglyceryl transferase from Fervidobacterium nodosum (strain ATCC 35602 / DSM 5306 / Rt17-B1).